Reading from the N-terminus, the 348-residue chain is MSKQTLILLYGGRSAEREVSVLSAESVMRAVDYNAFEVKTYFITQSGDFIKTQEFIETPGDDEKLMTNDTVEASQAIKPSDIYEEDAVVFPVLHGPMGEDGSIQGFLETLKLPYVGTNVLSSSVAMDKIMTKRILEVAGVPQVAYTGYIEGEDLEAAVAETLEKLTFPVFVKPANMGSSVGISKAENESELRSAIDLALKYDSRILIEQGVVAREIEVGILGNTTVKTTDPGEVVKDVAFYDYQAKYIDNKITMDIPARVPVEVMTQMRAYAAKAFRALGGCGLARCDFFLTEDGAIYLNELNTMPGFTQWSMYPLLWENMGLSYSDLIKELVVLGQEMFDKRESHLI.

An ATP-grasp domain is found at 132-334 (KRILEVAGVP…YSDLIKELVV (203 aa)). ATP is bound at residue 162–217 (LEKLTFPVFVKPANMGSSVGISKAENESELRSAIDLALKYDSRILIEQGVVAREIE). The Mg(2+) site is built by Asp288, Glu301, and Asn303.

Belongs to the D-alanine--D-alanine ligase family. Requires Mg(2+) as cofactor. Mn(2+) serves as cofactor.

The protein localises to the cytoplasm. The catalysed reaction is 2 D-alanine + ATP = D-alanyl-D-alanine + ADP + phosphate + H(+). It participates in cell wall biogenesis; peptidoglycan biosynthesis. Cell wall formation. This chain is D-alanine--D-alanine ligase, found in Streptococcus thermophilus (strain ATCC BAA-491 / LMD-9).